Consider the following 151-residue polypeptide: 16.9 kDa class I heat shock protein 1 (151 aa).

Residues 37–151 (ETAAFANARV…PEVKAIEISG (115 aa)) form the sHSP domain.

It belongs to the small heat shock protein (HSP20) family. In terms of assembly, may form oligomeric structures.

The protein localises to the cytoplasm. This chain is 16.9 kDa class I heat shock protein 1 (hsp16.9A), found in Triticum aestivum (Wheat).